We begin with the raw amino-acid sequence, 130 residues long: Small ribosomal subunit protein uS9 (130 aa).

It belongs to the universal ribosomal protein uS9 family.

This is Small ribosomal subunit protein uS9 from Vibrio cholerae serotype O1 (strain ATCC 39541 / Classical Ogawa 395 / O395).